The chain runs to 165 residues: Large ribosomal subunit protein uL15 (165 aa).

Over residues 1–29 (MTSKKKRQRGSRTHGGGSHKNRRGAGHRG) the composition is skewed to basic residues. Disordered stretches follow at residues 1-59 (MTSK…QKVQ) and 133-165 (KVEGAGGSVELTDLGEERQAEAEETEDADADEE). A compositionally biased stretch (basic and acidic residues) spans 30 to 47 (GRGDAGRDKHEFHNHEPL). A compositionally biased stretch (acidic residues) spans 154–165 (AEETEDADADEE).

Belongs to the universal ribosomal protein uL15 family. As to quaternary structure, part of the 50S ribosomal subunit. Interacts weakly with proteins L18e and L32e.

Binds to the 23S rRNA. In Haloarcula marismortui (strain ATCC 43049 / DSM 3752 / JCM 8966 / VKM B-1809) (Halobacterium marismortui), this protein is Large ribosomal subunit protein uL15 (rpl15).